A 125-amino-acid polypeptide reads, in one-letter code: Holo-[acyl-carrier-protein] synthase (125 aa).

Residues Asp8 and Glu57 each coordinate Mg(2+).

This sequence belongs to the P-Pant transferase superfamily. AcpS family. Mg(2+) is required as a cofactor.

Its subcellular location is the cytoplasm. The enzyme catalyses apo-[ACP] + CoA = holo-[ACP] + adenosine 3',5'-bisphosphate + H(+). Functionally, transfers the 4'-phosphopantetheine moiety from coenzyme A to a Ser of acyl-carrier-protein. This Laribacter hongkongensis (strain HLHK9) protein is Holo-[acyl-carrier-protein] synthase.